The chain runs to 721 residues: Fatty acid oxidation complex subunit alpha (721 aa).

The tract at residues 1–190 (MIYEGKAITV…KVGAVDAVVA (190 aa)) is enoyl-CoA hydratase/isomerase. Residue Asp297 participates in substrate binding. The tract at residues 312 to 721 (KDVKQAAVLG…SFFGQASSEE (410 aa)) is 3-hydroxyacyl-CoA dehydrogenase. NAD(+) contacts are provided by residues Met325, Asp344, 401–403 (VVE), Lys408, and Ser430. His451 acts as the For 3-hydroxyacyl-CoA dehydrogenase activity in catalysis. Residue Asn454 coordinates NAD(+). Substrate is bound by residues Asn501 and Tyr660.

The protein in the N-terminal section; belongs to the enoyl-CoA hydratase/isomerase family. It in the C-terminal section; belongs to the 3-hydroxyacyl-CoA dehydrogenase family. Heterotetramer of two alpha chains (FadB) and two beta chains (FadA).

The catalysed reaction is a (3S)-3-hydroxyacyl-CoA + NAD(+) = a 3-oxoacyl-CoA + NADH + H(+). It carries out the reaction a (3S)-3-hydroxyacyl-CoA = a (2E)-enoyl-CoA + H2O. The enzyme catalyses a 4-saturated-(3S)-3-hydroxyacyl-CoA = a (3E)-enoyl-CoA + H2O. It catalyses the reaction (3S)-3-hydroxybutanoyl-CoA = (3R)-3-hydroxybutanoyl-CoA. The catalysed reaction is a (3Z)-enoyl-CoA = a 4-saturated (2E)-enoyl-CoA. It carries out the reaction a (3E)-enoyl-CoA = a 4-saturated (2E)-enoyl-CoA. Its pathway is lipid metabolism; fatty acid beta-oxidation. Its function is as follows. Involved in the aerobic and anaerobic degradation of long-chain fatty acids via beta-oxidation cycle. Catalyzes the formation of 3-oxoacyl-CoA from enoyl-CoA via L-3-hydroxyacyl-CoA. It can also use D-3-hydroxyacyl-CoA and cis-3-enoyl-CoA as substrate. This Pseudomonas syringae pv. syringae (strain B728a) protein is Fatty acid oxidation complex subunit alpha.